The following is a 130-amino-acid chain: Mating-type-like protein A1 (130 aa).

A DNA-binding region (homeobox) is located at residues 68 to 127 (TYTTRKPLPAKAKLQLVETFSKKRYLTRCEKHQLAVQCGITTNQVQIWFANRRKRSKDLN).

Belongs to the MATA1 family.

The protein localises to the nucleus. Mating type proteins are sequence specific DNA-binding proteins that act as master switches in yeast differentiation by controlling gene expression in a cell type-specific fashion. The sequence is that of Mating-type-like protein A1 (MTL1A1) from Candida glabrata (strain ATCC 2001 / BCRC 20586 / JCM 3761 / NBRC 0622 / NRRL Y-65 / CBS 138) (Yeast).